The sequence spans 282 residues: Probable ribosomal RNA small subunit methyltransferase A (282 aa).

Positions 24, 26, 51, 72, 100, and 115 each coordinate S-adenosyl-L-methionine.

This sequence belongs to the class I-like SAM-binding methyltransferase superfamily. rRNA adenine N(6)-methyltransferase family. RsmA subfamily.

The protein localises to the cytoplasm. Specifically dimethylates two adjacent adenosines in the loop of a conserved hairpin near the 3'-end of 16S rRNA in the 30S particle. May play a critical role in biogenesis of 30S subunits. The polypeptide is Probable ribosomal RNA small subunit methyltransferase A (Halobacterium salinarum (strain ATCC 29341 / DSM 671 / R1)).